The primary structure comprises 233 residues: Probable dihydroorotate dehydrogenase B (NAD(+)), electron transfer subunit (233 aa).

The 87-residue stretch at 1–87 (MYRVVTIEEV…RGPYGHGFIK (87 aa)) folds into the FAD-binding FR-type domain. The [2Fe-2S] cluster site is built by Cys-202, Cys-207, Cys-210, and Cys-218.

This sequence belongs to the PyrK family. Heterotetramer of 2 PyrK and 2 PyrD type B subunits. [2Fe-2S] cluster serves as cofactor. FAD is required as a cofactor.

The protein operates within pyrimidine metabolism; UMP biosynthesis via de novo pathway; orotate from (S)-dihydroorotate (NAD(+) route): step 1/1. Responsible for channeling the electrons from the oxidation of dihydroorotate from the FMN redox center in the PyrD type B subunit to the ultimate electron acceptor NAD(+). The chain is Probable dihydroorotate dehydrogenase B (NAD(+)), electron transfer subunit from Thermococcus kodakarensis (strain ATCC BAA-918 / JCM 12380 / KOD1) (Pyrococcus kodakaraensis (strain KOD1)).